The chain runs to 177 residues: Centromere protein R (177 aa).

Residue Lys8 forms a Glycyl lysine isopeptide (Lys-Gly) (interchain with G-Cter in SUMO2) linkage. The LXXLL motif signature appears at 9-13 (LDGLL). Ser17 is modified (phosphoserine). The tract at residues 20–50 (PSKITRKKSVITYSPTTGTCQMSLFASPTSS) is DD1. Lys22 participates in a covalent cross-link: Glycyl lysine isopeptide (Lys-Gly) (interchain with G-Cter in SUMO2). Phosphoserine is present on Ser28. A compositionally biased stretch (polar residues) spans 41–50 (MSLFASPTSS). Residues 41-81 (MSLFASPTSSEEQKHRNGLSNEKRKKLNHPSLTESKESTTK) form a disordered region. The Nuclear localization signal signature appears at 63–66 (KRKK). Ser71 carries the phosphoserine modification. A coiled-coil region spans residues 83–113 (NDEFMMLLSKVEKLSEEIMEIMQNLSSIQAL). Residues 172-176 (LKAIL) carry the LXXIL motif motif.

Homodimer; mediated by the coiled coil domain. Isoform 3, but not other isoforms, interacts with the cytoplasmic tail of integrin ITGB3. The relevance of the interaction with ITGB3 is however uncertain, since isoform 3 is mainly nuclear. Interacts with CCNA2 and MTA1. Interacts with NFKB1 NF-kappa-B subunit. Component of the CENPA-CAD complex, composed of CENPI, CENPK, CENPL, CENPO, CENPP, CENPQ, CENPR and CENPS. The CENPA-CAD complex interacts with the CENPA-NAC complex, at least composed of CENPA, CENPC, CENPH, CENPM, CENPN, CENPT and CENPU. Interacts with TASOR. Widely expressed. Expressed in spleen, thymus, prostate, ovary, small intestine and white blood cells. Highly expressed in testis and colon. Isoform 4 is expressed in platelets, lymphocytes and granulocytes.

It localises to the nucleus. It is found in the chromosome. Its subcellular location is the centromere. The protein localises to the kinetochore. The protein resides in the cytoplasm. In terms of biological role, transcription coregulator that can have both coactivator and corepressor functions. Isoform 1, but not other isoforms, is involved in the coactivation of nuclear receptors for retinoid X (RXRs) and thyroid hormone (TRs) in a ligand-dependent fashion. In contrast, it does not coactivate nuclear receptors for retinoic acid, vitamin D, progesterone receptor, nor glucocorticoid. Acts as a coactivator for estrogen receptor alpha. Acts as a transcriptional corepressor via its interaction with the NFKB1 NF-kappa-B subunit, possibly by interfering with the transactivation domain of NFKB1. Induces apoptosis in breast cancer cells, but not in other cancer cells, via a caspase-2 mediated pathway that involves mitochondrial membrane permeabilization but does not require other caspases. May also act as an inhibitor of cyclin A-associated kinase. Also acts a component of the CENPA-CAD (nucleosome distal) complex, a complex recruited to centromeres which is involved in assembly of kinetochore proteins, mitotic progression and chromosome segregation. May be involved in incorporation of newly synthesized CENPA into centromeres via its interaction with the CENPA-NAC complex. The polypeptide is Centromere protein R (ITGB3BP) (Homo sapiens (Human)).